A 458-amino-acid chain; its full sequence is Serine--tRNA ligase (458 aa).

An L-serine-binding site is contributed by 252–254; it reads TAE. Residues 283–285 and Val-299 contribute to the ATP site; that span reads RKE. Glu-306 is an L-serine binding site. 370-373 lines the ATP pocket; the sequence is EMVS. Residue Thr-405 participates in L-serine binding.

This sequence belongs to the class-II aminoacyl-tRNA synthetase family. Type-1 seryl-tRNA synthetase subfamily. In terms of assembly, homodimer. The tRNA molecule binds across the dimer.

It localises to the cytoplasm. It carries out the reaction tRNA(Ser) + L-serine + ATP = L-seryl-tRNA(Ser) + AMP + diphosphate + H(+). The enzyme catalyses tRNA(Sec) + L-serine + ATP = L-seryl-tRNA(Sec) + AMP + diphosphate + H(+). It participates in aminoacyl-tRNA biosynthesis; selenocysteinyl-tRNA(Sec) biosynthesis; L-seryl-tRNA(Sec) from L-serine and tRNA(Sec): step 1/1. In terms of biological role, catalyzes the attachment of serine to tRNA(Ser). Is also able to aminoacylate tRNA(Sec) with serine, to form the misacylated tRNA L-seryl-tRNA(Sec), which will be further converted into selenocysteinyl-tRNA(Sec). In Sulfolobus acidocaldarius (strain ATCC 33909 / DSM 639 / JCM 8929 / NBRC 15157 / NCIMB 11770), this protein is Serine--tRNA ligase.